Here is a 158-residue protein sequence, read N- to C-terminus: Putative cTAGE family member 3 (158 aa).

Residues 26–96 (QLQESQKQLL…AAVLEEDITD (71 aa)) are a coiled coil.

Belongs to the cTAGE family. Expressed in normal tissues including colon, mammary gland, ovary, placenta, stomach and testis, as well as several fetal tissues.

Functionally, tumor-associated antigen. This chain is Putative cTAGE family member 3 (CTAGE3P), found in Homo sapiens (Human).